Here is a 122-residue protein sequence, read N- to C-terminus: uncharacterized protein (122 aa).

2 consecutive transmembrane segments (helical) span residues 36-56 (SVRS…YSQF) and 72-92 (AVFL…FSTD).

It is found in the membrane. This is an uncharacterized protein from Saccharomyces cerevisiae (strain ATCC 204508 / S288c) (Baker's yeast).